The primary structure comprises 378 residues: MKLSFDLKKKNGNARRGQLTFERGTVQTPAFMPVGTYGTVKGMTPEEVKGTGAEILLGNTFHLWLRPGQEVMKMHGDLHDFMNWHGPILTDSGGFQVFSLGKMRKITEKGVHFRSPVNGDKIFMDAEKSMEIQKDLGSDIVMIFDECTPYPATHNEAKKSMEMSLRWAQRSRDHFDKLENPNNLFGIVQGGVYEDLRDVSIKGLTEIGFDGYAVGGLAVGEPKEDMHRILEHTCPQLPEDKPRYLMGVGKPEDLVEGVRRGIDMFDCVMPTRNARNGHLFVTGGVIKIRNAKHKTDTTPLDPHCDCYTCQHYSKSYLHHLERCNEILGARLNTIHNLRYYQRLMESIRKAIDEDRFDEFVTEFYERRGREVPPLAKEQ.

The active-site Proton acceptor is D91. Residues D91–F95, D145, Q189, and G216 contribute to the substrate site. The segment at G247–D253 is RNA binding. D266 (nucleophile) is an active-site residue. The interval T271–R275 is RNA binding; important for wobble base 34 recognition. Residues C304, C306, C309, and H335 each coordinate Zn(2+).

Belongs to the queuine tRNA-ribosyltransferase family. As to quaternary structure, homodimer. Within each dimer, one monomer is responsible for RNA recognition and catalysis, while the other monomer binds to the replacement base PreQ1. It depends on Zn(2+) as a cofactor.

The enzyme catalyses 7-aminomethyl-7-carbaguanine + guanosine(34) in tRNA = 7-aminomethyl-7-carbaguanosine(34) in tRNA + guanine. It functions in the pathway tRNA modification; tRNA-queuosine biosynthesis. Functionally, catalyzes the base-exchange of a guanine (G) residue with the queuine precursor 7-aminomethyl-7-deazaguanine (PreQ1) at position 34 (anticodon wobble position) in tRNAs with GU(N) anticodons (tRNA-Asp, -Asn, -His and -Tyr). Catalysis occurs through a double-displacement mechanism. The nucleophile active site attacks the C1' of nucleotide 34 to detach the guanine base from the RNA, forming a covalent enzyme-RNA intermediate. The proton acceptor active site deprotonates the incoming PreQ1, allowing a nucleophilic attack on the C1' of the ribose to form the product. After dissociation, two additional enzymatic reactions on the tRNA convert PreQ1 to queuine (Q), resulting in the hypermodified nucleoside queuosine (7-(((4,5-cis-dihydroxy-2-cyclopenten-1-yl)amino)methyl)-7-deazaguanosine). The protein is Queuine tRNA-ribosyltransferase of Vibrio campbellii (strain ATCC BAA-1116).